The primary structure comprises 618 residues: Indolepyruvate oxidoreductase subunit IorA (618 aa).

4Fe-4S ferredoxin-type domains follow at residues Arg559–Val590 and Gly588–Lys617. [4Fe-4S] cluster contacts are provided by Cys568, Cys571, Cys574, Cys580, Cys597, Cys600, Cys603, and Cys607.

Heterodimer of the IorA and IorB subunits. Requires [4Fe-4S] cluster as cofactor.

It catalyses the reaction indole-3-pyruvate + 2 oxidized [2Fe-2S]-[ferredoxin] + CoA = (indol-3-yl)acetyl-CoA + 2 reduced [2Fe-2S]-[ferredoxin] + CO2 + H(+). Catalyzes the ferredoxin-dependent oxidative decarboxylation of arylpyruvates. This Methanothermobacter marburgensis (strain ATCC BAA-927 / DSM 2133 / JCM 14651 / NBRC 100331 / OCM 82 / Marburg) (Methanobacterium thermoautotrophicum) protein is Indolepyruvate oxidoreductase subunit IorA (iorA).